A 213-amino-acid polypeptide reads, in one-letter code: MKKLLKQSLLGFALVSMTGAAFADAQSVAELQRRLEQVSQYSADFDQTVRSSKGKQIQSGKGKFQVKRPNLFRMDTKSPQENLIVSDGANLWFYDPFVSQVTVNTVQDAVNNTPFVLLTSSDKSHWDQYDVTQNADTFVLKPKSKKSNLKQFDVRIDQSGMLKGFSTIERDGQSNLYVLRNITGGGVSSDLFKFSVPKGAELDDQRGGKKSKK.

Positions 1 to 23 (MKKLLKQSLLGFALVSMTGAAFA) are cleaved as a signal peptide.

Belongs to the LolA family. In terms of assembly, monomer.

Its subcellular location is the periplasm. Participates in the translocation of lipoproteins from the inner membrane to the outer membrane. Only forms a complex with a lipoprotein if the residue after the N-terminal Cys is not an aspartate (The Asp acts as a targeting signal to indicate that the lipoprotein should stay in the inner membrane). This is Outer-membrane lipoprotein carrier protein from Actinobacillus pleuropneumoniae serotype 7 (strain AP76).